Consider the following 142-residue polypeptide: Large ribosomal subunit protein uL11 (142 aa).

It belongs to the universal ribosomal protein uL11 family. In terms of assembly, part of the ribosomal stalk of the 50S ribosomal subunit. Interacts with L10 and the large rRNA to form the base of the stalk. L10 forms an elongated spine to which L12 dimers bind in a sequential fashion forming a multimeric L10(L12)X complex. Post-translationally, one or more lysine residues are methylated.

In terms of biological role, forms part of the ribosomal stalk which helps the ribosome interact with GTP-bound translation factors. The sequence is that of Large ribosomal subunit protein uL11 from Vibrio vulnificus (strain YJ016).